The sequence spans 382 residues: Anhydro-N-acetylmuramic acid kinase (382 aa).

Residue 22–29 (GTSMDGVD) coordinates ATP.

Belongs to the anhydro-N-acetylmuramic acid kinase family.

It carries out the reaction 1,6-anhydro-N-acetyl-beta-muramate + ATP + H2O = N-acetyl-D-muramate 6-phosphate + ADP + H(+). It participates in amino-sugar metabolism; 1,6-anhydro-N-acetylmuramate degradation. Its pathway is cell wall biogenesis; peptidoglycan recycling. In terms of biological role, catalyzes the specific phosphorylation of 1,6-anhydro-N-acetylmuramic acid (anhMurNAc) with the simultaneous cleavage of the 1,6-anhydro ring, generating MurNAc-6-P. Is required for the utilization of anhMurNAc either imported from the medium or derived from its own cell wall murein, and thus plays a role in cell wall recycling. The polypeptide is Anhydro-N-acetylmuramic acid kinase (Burkholderia cenocepacia (strain ATCC BAA-245 / DSM 16553 / LMG 16656 / NCTC 13227 / J2315 / CF5610) (Burkholderia cepacia (strain J2315))).